Reading from the N-terminus, the 160-residue chain is S-ribosylhomocysteine lyase (160 aa).

H57, H61, and C127 together coordinate Fe cation.

It belongs to the LuxS family. In terms of assembly, homodimer. It depends on Fe cation as a cofactor.

The enzyme catalyses S-(5-deoxy-D-ribos-5-yl)-L-homocysteine = (S)-4,5-dihydroxypentane-2,3-dione + L-homocysteine. Functionally, involved in the synthesis of autoinducer 2 (AI-2) which is secreted by bacteria and is used to communicate both the cell density and the metabolic potential of the environment. The regulation of gene expression in response to changes in cell density is called quorum sensing. Catalyzes the transformation of S-ribosylhomocysteine (RHC) to homocysteine (HC) and 4,5-dihydroxy-2,3-pentadione (DPD). This chain is S-ribosylhomocysteine lyase, found in Streptococcus sanguinis (strain SK36).